The following is a 236-amino-acid chain: Pyridoxal phosphate homeostasis protein (236 aa).

The residue at position 36 (K36) is an N6-(pyridoxal phosphate)lysine.

It belongs to the pyridoxal phosphate-binding protein YggS/PROSC family.

Functionally, pyridoxal 5'-phosphate (PLP)-binding protein, which is involved in PLP homeostasis. The sequence is that of Pyridoxal phosphate homeostasis protein from Vibrio cholerae serotype O1 (strain ATCC 39315 / El Tor Inaba N16961).